The sequence spans 307 residues: MNSTEPDSARVTRTDRLDPPEIADVLTLARAAGDADGADPFDEHTLLRLRDPHAPAHHLTVRAADGILAGYAHLDSTDPAAGTGVELAVHPTYRRQGIGRALARAVRATVTGPLRAWAHGDHPSAAALAVDLGYRRARVLWQLRRPLSAPIPQPPLPEGVTLRAFRPGTDDDAWLALNARAFADHPEQGRWTSADLRARRDEPWFDAAGFLLAVDPAGHLRGFHWTKVHERPGSPRIGEVYVLGVDPQAHGGGLGKALTAAGLAYLRDRRGLDRVMLYVDESNTAAVALYERLGFARWSAHVNYQRS.

2 N-acetyltransferase domains span residues 12-152 (TRTD…APIP) and 160-307 (VTLR…YQRS). Residue glutamate 43 coordinates 1D-myo-inositol 2-(L-cysteinylamino)-2-deoxy-alpha-D-glucopyranoside. 87–89 (LAV) serves as a coordination point for acetyl-CoA. 3 residues coordinate 1D-myo-inositol 2-(L-cysteinylamino)-2-deoxy-alpha-D-glucopyranoside: glutamate 187, lysine 227, and glutamate 239. Residues 243 to 245 (LGV) and 250 to 256 (HGGGLGK) each bind acetyl-CoA. Tyrosine 278 is a 1D-myo-inositol 2-(L-cysteinylamino)-2-deoxy-alpha-D-glucopyranoside binding site.

Belongs to the acetyltransferase family. MshD subfamily. As to quaternary structure, monomer.

It catalyses the reaction 1D-myo-inositol 2-(L-cysteinylamino)-2-deoxy-alpha-D-glucopyranoside + acetyl-CoA = mycothiol + CoA + H(+). Catalyzes the transfer of acetyl from acetyl-CoA to desacetylmycothiol (Cys-GlcN-Ins) to form mycothiol. This Salinispora arenicola (strain CNS-205) protein is Mycothiol acetyltransferase.